The sequence spans 169 residues: T-cell receptor gamma chain C region DFL12 (169 aa).

The segment at 1 to 136 (PSDKRLDADI…LQFMSTSAYY (136 aa)) is c region. Residues 137 to 157 (TYLLLLLKSVIYLAIISFSLL) form a helical membrane-spanning segment. Over 158–169 (RRTSVCCNEKRS) the chain is Cytoplasmic.

It localises to the membrane. In Mus musculus (Mouse), this protein is T-cell receptor gamma chain C region DFL12.